The primary structure comprises 186 residues: ADP-ribosylation factor-like protein alp41 (186 aa).

A lipid anchor (N-myristoyl glycine) is attached at Gly2. GTP contacts are provided by residues 23–30, 66–70, and 125–128; these read GLDNAGKT, DIGGQ, and NKSD.

The protein belongs to the small GTPase superfamily. Arf family.

Its subcellular location is the cytoplasm. The protein localises to the cytoskeleton. Has a role in the cofactor-dependent pathway of microtubule biogenesis. Required for growth polarity control. The chain is ADP-ribosylation factor-like protein alp41 (alp41) from Schizosaccharomyces pombe (strain 972 / ATCC 24843) (Fission yeast).